Here is a 357-residue protein sequence, read N- to C-terminus: Peptide chain release factor 1 (357 aa).

Glutamine 234 is subject to N5-methylglutamine. The span at 284 to 307 (KKQEQRSNDRKQQVGSGDRSERIR) shows a compositional bias: basic and acidic residues. The segment at 284–313 (KKQEQRSNDRKQQVGSGDRSERIRTYNFPQ) is disordered.

This sequence belongs to the prokaryotic/mitochondrial release factor family. In terms of processing, methylated by PrmC. Methylation increases the termination efficiency of RF1.

Its subcellular location is the cytoplasm. In terms of biological role, peptide chain release factor 1 directs the termination of translation in response to the peptide chain termination codons UAG and UAA. The chain is Peptide chain release factor 1 from Borrelia turicatae (strain 91E135).